We begin with the raw amino-acid sequence, 140 residues long: FlaA locus uncharacterized protein YlxG (140 aa).

The tract at residues 1–21 (MTSISSEYKLPEKTNTVSTNN) is disordered.

It belongs to the FlgD family.

This is FlaA locus uncharacterized protein YlxG (ylxG) from Bacillus subtilis (strain 168).